The following is an 828-amino-acid chain: Cadherin-22 (828 aa).

Positions 1-34 (MRPRPEGRGLRAGVALSPALLLLLLLPPPPTLLG) are cleaved as a signal peptide. The Extracellular segment spans residues 36-624 (LWAAGTPSPS…AFVMAASLSP (589 aa)). Cadherin domains lie at 64–168 (WVWN…EPRF), 169–277 (LHGP…PPRF), 278–394 (PQKM…PPEF), 395–498 (RPPS…NPPE), and 499–616 (LATP…TTAF). A glycan (N-linked (GlcNAc...) asparagine) is linked at asparagine 162. Residues asparagine 466 and asparagine 612 are each glycosylated (N-linked (GlcNAc...) asparagine). Residues 625–645 (GALIALLVCVLILVVLVLLIL) form a helical membrane-spanning segment. At 646 to 828 (TLRRHHKSHL…HRGDDEAQAS (183 aa)) the chain is on the cytoplasmic side. Over residues 702–719 (GGGSAGGGAGGGSGGGAG) the composition is skewed to gly residues. The segment at 702–745 (GGGSAGGGAGGGSGGGAGSPPQAHLPSERHSLPQGPPSPEPDFS) is disordered.

Its subcellular location is the cell membrane. Its function is as follows. Cadherins are calcium-dependent cell adhesion proteins. They preferentially interact with themselves in a homophilic manner in connecting cells; cadherins may thus contribute to the sorting of heterogeneous cell types. PB-cadherins may have a role in the morphological organization of pituitary gland and brain tissues. The chain is Cadherin-22 (CDH22) from Homo sapiens (Human).